Here is a 173-residue protein sequence, read N- to C-terminus: Sialic acid TRAP transporter small permease protein SiaQ (173 aa).

4 consecutive transmembrane segments (helical) span residues 13 to 33, 46 to 66, 87 to 107, and 123 to 143; these read IEEIITVPLMAALLAVLTWQI, SEELARLLFMYMCLVGCAIAI, LSLVLSLEIAVLVSIGAIIVL, and LGISSSWMNYSLPVGGVFMVF.

The protein belongs to the TRAP transporter small permease family. The complex comprises the extracytoplasmic solute receptor protein SiaP, and the two transmembrane proteins SiaQ and SiaM. SiaQ and SiaM form a tight 1:1 complex.

It is found in the cell inner membrane. Part of the tripartite ATP-independent periplasmic (TRAP) transport system SiaPQM that catalyzes unidirectional Na(+)-dependent sialic acid uptake. The protein is Sialic acid TRAP transporter small permease protein SiaQ of Vibrio cholerae serotype O1 (strain ATCC 39315 / El Tor Inaba N16961).